The following is a 204-amino-acid chain: Nucleoside triphosphate pyrophosphatase (204 aa).

Asp79 acts as the Proton acceptor in catalysis.

It belongs to the Maf family. A divalent metal cation serves as cofactor.

It localises to the cytoplasm. It catalyses the reaction a ribonucleoside 5'-triphosphate + H2O = a ribonucleoside 5'-phosphate + diphosphate + H(+). The catalysed reaction is a 2'-deoxyribonucleoside 5'-triphosphate + H2O = a 2'-deoxyribonucleoside 5'-phosphate + diphosphate + H(+). Functionally, nucleoside triphosphate pyrophosphatase. May have a dual role in cell division arrest and in preventing the incorporation of modified nucleotides into cellular nucleic acids. In Trichodesmium erythraeum (strain IMS101), this protein is Nucleoside triphosphate pyrophosphatase.